The primary structure comprises 123 residues: UPF0738 protein BCG9842_B4089 (123 aa).

Belongs to the UPF0738 family.

The polypeptide is UPF0738 protein BCG9842_B4089 (Bacillus cereus (strain G9842)).